The chain runs to 117 residues: Hydrogenase maturation factor HypA (117 aa).

Position 2 (His-2) interacts with Ni(2+). 4 residues coordinate Zn(2+): Cys-73, Cys-76, Cys-89, and Cys-92.

It belongs to the HypA/HybF family.

Its function is as follows. Involved in the maturation of [NiFe] hydrogenases. Required for nickel insertion into the metal center of the hydrogenase. The sequence is that of Hydrogenase maturation factor HypA from Chlorobium luteolum (strain DSM 273 / BCRC 81028 / 2530) (Pelodictyon luteolum).